Reading from the N-terminus, the 443-residue chain is MDKKPLDTLISATGLWMSRTGMIHKIKHHEVSRSKIYIEMACGERLVVNNSRSSRTARALRHHKYRKTCRHCRVSDEDINNFLTKTSEEKTTVKVKVVSAPRVRKAMPKSVARAPKPLEATAQVPLSGSKPAPATPVSAPAQAPAPSTGSASATSASAQRMANSAAAPAAPVPTSAPALTKGQLDRLEGLLSPKDEISLDSEKPFRELESELLSRRKKDLKRIYAEERENYLGKLEREITKFFVDRGFLEIKSPILIPAEYVERMGINSDTELSKQVFRIDKNFCLRPMLAPNLYNYLRKLDRALPDPIKIFEIGPCYRKESDGKEHLEEFTMLNFCQMGSGCTRENLEAIITEFLNHLGIDFEIIGDSCMVYGNTLDVMHDDLELSSAVVGPVPLDREWGIDKPWIGAGFGLERLLKVMHGFKNIKRAARSESYYNGISTNL.

The segment at 103 to 177 (VRKAMPKSVA…PAAPVPTSAP (75 aa)) is disordered. The segment covering 131–177 (PAPATPVSAPAQAPAPSTGSASATSASAQRMANSAAAPAAPVPTSAP) has biased composition (low complexity).

Belongs to the class-II aminoacyl-tRNA synthetase family.

The protein localises to the cytoplasm. It carries out the reaction tRNA(Pyl) + L-pyrrolysine + ATP = L-pyrrolysyl-tRNA(Pyl) + AMP + diphosphate. Functionally, catalyzes the attachment of pyrrolysine to tRNA(Pyl). Pyrrolysine is a lysine derivative encoded by the termination codon UAG. This Methanosarcina acetivorans (strain ATCC 35395 / DSM 2834 / JCM 12185 / C2A) protein is Pyrrolysine--tRNA ligase.